We begin with the raw amino-acid sequence, 217 residues long: Dephospho-CoA kinase (217 aa).

Residues valine 2 to lysine 217 form the DPCK domain. An ATP-binding site is contributed by alanine 10–threonine 15.

The protein belongs to the CoaE family.

It localises to the cytoplasm. It carries out the reaction 3'-dephospho-CoA + ATP = ADP + CoA + H(+). It participates in cofactor biosynthesis; coenzyme A biosynthesis; CoA from (R)-pantothenate: step 5/5. Catalyzes the phosphorylation of the 3'-hydroxyl group of dephosphocoenzyme A to form coenzyme A. This is Dephospho-CoA kinase from Lactococcus lactis subsp. lactis (strain IL1403) (Streptococcus lactis).